The following is a 128-amino-acid chain: MKQQVEVKELKEGKYVIIDDEACVIKSITKSKPGKHGAAKARVEAIGLFDGQKRSYIGSVANKVYVPIVERKSAQVISITGDIAQLMDMGDFSTFEIVIPDELKDRVKEGEEVSYITALGKVKLDIRT.

K35 carries the post-translational modification Hypusine.

The protein belongs to the eIF-5A family.

The protein resides in the cytoplasm. In terms of biological role, functions by promoting the formation of the first peptide bond. The sequence is that of Translation initiation factor 5A (eif5a) from Methanosarcina mazei (strain ATCC BAA-159 / DSM 3647 / Goe1 / Go1 / JCM 11833 / OCM 88) (Methanosarcina frisia).